Consider the following 274-residue polypeptide: Ribosomal RNA small subunit methyltransferase A (274 aa).

Residues asparagine 28, leucine 30, glycine 55, glutamate 77, aspartate 103, and asparagine 122 each contribute to the S-adenosyl-L-methionine site.

The protein belongs to the class I-like SAM-binding methyltransferase superfamily. rRNA adenine N(6)-methyltransferase family. RsmA subfamily.

The protein resides in the cytoplasm. It catalyses the reaction adenosine(1518)/adenosine(1519) in 16S rRNA + 4 S-adenosyl-L-methionine = N(6)-dimethyladenosine(1518)/N(6)-dimethyladenosine(1519) in 16S rRNA + 4 S-adenosyl-L-homocysteine + 4 H(+). Its function is as follows. Specifically dimethylates two adjacent adenosines (A1518 and A1519) in the loop of a conserved hairpin near the 3'-end of 16S rRNA in the 30S particle. May play a critical role in biogenesis of 30S subunits. The chain is Ribosomal RNA small subunit methyltransferase A from Rhizobium meliloti (strain 1021) (Ensifer meliloti).